A 314-amino-acid chain; its full sequence is Small glutamine-rich tetratricopeptide repeat-containing protein alpha (314 aa).

Residues 65–99 (ATASKEMPQDPRGPDRTPPSEEDSAEAERLKTEGN) form a disordered region. The span at 71 to 83 (MPQDPRGPDRTPP) shows a compositional bias: basic and acidic residues. Position 81 is a phosphothreonine (Thr-81). Residue Ser-84 is modified to Phosphoserine. Positions 90 to 99 (EAERLKTEGN) are enriched in basic and acidic residues. 3 TPR repeats span residues 91-124 (AERL…NPAN), 125-158 (AVYF…DPGY), and 159-192 (SKAY…DPDN). Lys-137 carries the N6-acetyllysine modification. Residues 249 to 268 (GMISGGHNPLGTPGSSPQHS) are disordered. Position 302 is a phosphoserine (Ser-302). At Thr-304 the chain carries Phosphothreonine. Ser-306 bears the Phosphoserine mark.

This sequence belongs to the SGT family. Homodimer. Homooligomer. Interacts with DNAJC5 and DNAJC5B. Interacts (via TPR repeats) with HSP90AA1. Interacts (via Gln-rich region) with SLC2A1. Interacts with HSP90AB1. Interacts (via TPR repeats) with HSPA8/Hsc70; the interaction is direct. Interacts with BAG6 (via ubiquitin-like domain); interaction prevents interaction between BAG6 and RNF126. Forms a multiprotein complex, at least composed of DNAJB12, DNAJB14, HSPA8/Hsc70 and SGTA; interaction with DNAJB14 and HSPA8/Hsc70 is direct. As to quaternary structure, (Microbial infection) Interacts with NS1 from parvovirus H-1. As to expression, ubiquitously expressed.

It localises to the cytoplasm. It is found in the nucleus. Its function is as follows. Co-chaperone that binds misfolded and hydrophobic patches-containing client proteins in the cytosol. Mediates their targeting to the endoplasmic reticulum but also regulates their sorting to the proteasome when targeting fails. Functions in tail-anchored/type II transmembrane proteins membrane insertion constituting with ASNA1 and the BAG6 complex a targeting module. Functions upstream of the BAG6 complex and ASNA1, binding more rapidly the transmembrane domain of newly synthesized proteins. It is also involved in the regulation of the endoplasmic reticulum-associated misfolded protein catabolic process via its interaction with BAG6: collaborates with the BAG6 complex to maintain hydrophobic substrates in non-ubiquitinated states. Competes with RNF126 for interaction with BAG6, preventing the ubiquitination of client proteins associated with the BAG6 complex. Binds directly to HSC70 and HSP70 and regulates their ATPase activity. The chain is Small glutamine-rich tetratricopeptide repeat-containing protein alpha (Sgta) from Rattus norvegicus (Rat).